Consider the following 247-residue polypeptide: MQTQVLFEHPLNEKMRTWLRIEFLIQQLTVNLPIADHAGALHFFRNVSELLDVFERGEVRTELLKELDRQQRKLQTWIGVPGVDQSRIEALIQQLKAAGSVLISAPRIGQFLREDRLIALVRQRLSIPGGCCSFDLPSLHIWLHLPQAQRDSQVETWIASLNPLTQALTMVLDLIRQSAPFRKQTSLNGFYQDNGGDADLLRLNLSLDSQLYPQISGHKSRFAIRFMPLDSENGQVPERLDFELACC.

The protein belongs to the ZapD family. As to quaternary structure, interacts with FtsZ.

It localises to the cytoplasm. Functionally, cell division factor that enhances FtsZ-ring assembly. Directly interacts with FtsZ and promotes bundling of FtsZ protofilaments, with a reduction in FtsZ GTPase activity. This Escherichia coli O17:K52:H18 (strain UMN026 / ExPEC) protein is Cell division protein ZapD.